Consider the following 3658-residue polypeptide: Serine/threonine-protein kinase SMG1 (3658 aa).

Disordered regions lie at residues Met1–Arg99 and Phe116–Ser142. A compositionally biased stretch (polar residues) spans Asn24–Ala33. Basic and acidic residues-rich tracts occupy residues Gln67–Gly84 and Ala127–Glu136. Residue Lys171 is modified to N6-acetyllysine. Positions Arg1281–Ser1864 constitute an FAT domain. The stretch at Ala1815–Ser1850 is one HEAT repeat. The interval Glu1896–Leu1917 is disordered. Residues Val2122–Phe2461 form the PI3K/PI4K catalytic domain. The tract at residues Ile2128 to Lys2134 is G-loop. The segment at Gly2330–Asn2338 is catalytic loop. The interval His2350 to Thr2374 is activation loop. Thr3547 bears the Phosphothreonine mark. A phosphoserine mark is found at Ser3553 and Ser3567. Residues Ala3565–Pro3576 show a composition bias toward polar residues. The interval Ala3565 to Lys3588 is disordered. Residues Thr3570 and Thr3574 each carry the phosphothreonine modification. One can recognise an FATC domain in the interval Arg3626–Val3658.

It belongs to the PI3/PI4-kinase family. As to quaternary structure, component of the SMG1C complex composed of SMG1, SMG8 and SMG9; the recruitment of SMG8 to SMG1 N-terminus induces a large conformational change in the SMG1 C-terminal head domain containing the catalytic domain. Component of the transient SURF (SMG1-UPF1-eRF1-eRF3) complex. Part of a complex composed of SMG1, DHX34 and UPF1; within the complex DHX34 acts as a scaffolding protein to facilitate SMG1 phosphorylation of UPF1. Interacts with PRKCI. Interacts with TELO2 and TTI1. Interacts with RUVBL1 and RUVBL2. Interacts with DHX34 (via C-terminus); the interaction is RNA-independent. Mn(2+) serves as cofactor. In terms of processing, autophosphorylated.

It localises to the nucleus. The protein resides in the cytoplasm. The enzyme catalyses L-seryl-[protein] + ATP = O-phospho-L-seryl-[protein] + ADP + H(+). It carries out the reaction L-threonyl-[protein] + ATP = O-phospho-L-threonyl-[protein] + ADP + H(+). Its activity is regulated as follows. Inhibited by caffeine, LY294002 and wortmannin. Its function is as follows. Serine/threonine protein kinase involved in both mRNA surveillance and genotoxic stress response pathways. Recognizes the substrate consensus sequence [ST]-Q. Plays a central role in nonsense-mediated decay (NMD) of mRNAs containing premature stop codons by phosphorylating UPF1/RENT1. Recruited by release factors to stalled ribosomes together with SMG8 and SMG9 (forming the SMG1C protein kinase complex), and UPF1 to form the transient SURF (SMG1-UPF1-eRF1-eRF3) complex. In EJC-dependent NMD, the SURF complex associates with the exon junction complex (EJC) through UPF2 and allows the formation of an UPF1-UPF2-UPF3 surveillance complex which is believed to activate NMD. Also acts as a genotoxic stress-activated protein kinase that displays some functional overlap with ATM. Can phosphorylate p53/TP53 and is required for optimal p53/TP53 activation after cellular exposure to genotoxic stress. Its depletion leads to spontaneous DNA damage and increased sensitivity to ionizing radiation (IR). May activate PRKCI but not PRKCZ. The sequence is that of Serine/threonine-protein kinase SMG1 from Mus musculus (Mouse).